Reading from the N-terminus, the 751-residue chain is Polyadenylate-binding protein, cytoplasmic and nuclear (751 aa).

Composition is skewed to polar residues over residues 1–26 (MSAE…NPAA) and 36–50 (ESAS…NQPH). The tract at residues 1 to 50 (MSAEVSTTPAADNTVNGTPEATNPAATSAPEVTAVESASPSATPSANQPH) is disordered. RRM domains are found at residues 52 to 130 (ASLY…WSQR), 140 to 217 (GNVF…HHIS), 233 to 310 (TNVY…RAQK), and 336 to 458 (VNLY…LAQR). Disordered regions lie at residues 371–413 (TVTA…KKTE) and 601–643 (GQGM…REEV). Residues 379 to 413 (ESEKEKESNKENEKEGEEKTEEKPKESEEEAKKTE) are compositionally biased toward basic and acidic residues. Residues 603 to 629 (GMRGPGYGQGRGGAPVQGGPRPQGGRG) are compositionally biased toward gly residues. One can recognise a PABC domain in the interval 646-723 (TGGLTAQTLN…ALSVYDEYMK (78 aa)). Positions 725–751 (KGEGEAPAEPAKPKEDAAETATEENKS) are disordered. Over residues 735-751 (AKPKEDAAETATEENKS) the composition is skewed to basic and acidic residues.

This sequence belongs to the polyadenylate-binding protein type-1 family.

It is found in the cytoplasm. It localises to the nucleus. In terms of biological role, binds the poly(A) tail of mRNA. Appears to be an important mediator of the multiple roles of the poly(A) tail in mRNA biogenesis, stability and translation. In the nucleus, involved in both mRNA cleavage and polyadenylation. Is also required for efficient mRNA export to the cytoplasm. Acts in concert with a poly(A)-specific nuclease (PAN) to affect poly(A) tail shortening, which may occur concomitantly with either nucleocytoplasmic mRNA transport or translational initiation. In the cytoplasm, stimulates translation initiation and regulates mRNA decay through translation termination-coupled poly(A) shortening, probably mediated by PAN. This chain is Polyadenylate-binding protein, cytoplasmic and nuclear (pab1), found in Neosartorya fischeri (strain ATCC 1020 / DSM 3700 / CBS 544.65 / FGSC A1164 / JCM 1740 / NRRL 181 / WB 181) (Aspergillus fischerianus).